The following is a 547-amino-acid chain: ATP synthase subunit beta, mitochondrial (547 aa).

Residues 1-45 constitute a mitochondrion transit peptide; it reads MASRRLLSSFLRSSTRRSLRPSFSNPRPSFLTSYCSSPASILRRY. Positions 52-62 are enriched in low complexity; the sequence is KEPAASKPAGT. Residues 52–74 are disordered; it reads KEPAASKPAGTAGTGKGTITDEK. 226–233 is a binding site for ATP; the sequence is GGDWVGKT.

Belongs to the ATPase alpha/beta chains family. In terms of assembly, F-type ATPases have 2 components, CF(1) - the catalytic core - and CF(0) - the membrane proton channel. CF(1) has five subunits: alpha(3), beta(3), gamma(1), delta(1), epsilon(1). CF(0) has three main subunits: a, b and c.

It localises to the mitochondrion. Its subcellular location is the mitochondrion inner membrane. It catalyses the reaction ATP + H2O + 4 H(+)(in) = ADP + phosphate + 5 H(+)(out). In terms of biological role, mitochondrial membrane ATP synthase (F(1)F(0) ATP synthase or Complex V) produces ATP from ADP in the presence of a proton gradient across the membrane which is generated by electron transport complexes of the respiratory chain. F-type ATPases consist of two structural domains, F(1) - containing the extramembraneous catalytic core, and F(0) - containing the membrane proton channel, linked together by a central stalk and a peripheral stalk. During catalysis, ATP synthesis in the catalytic domain of F(1) is coupled via a rotary mechanism of the central stalk subunits to proton translocation. Subunits alpha and beta form the catalytic core in F(1). Rotation of the central stalk against the surrounding alpha(3)beta(3) subunits leads to hydrolysis of ATP in three separate catalytic sites on the beta subunits. The protein is ATP synthase subunit beta, mitochondrial (ATPB) of Daucus carota (Wild carrot).